A 194-amino-acid polypeptide reads, in one-letter code: Peptidyl-tRNA hydrolase (194 aa).

Residue His17 participates in tRNA binding. Catalysis depends on His22, which acts as the Proton acceptor. Positions 68, 70, and 116 each coordinate tRNA.

Belongs to the PTH family. In terms of assembly, monomer.

The protein resides in the cytoplasm. The enzyme catalyses an N-acyl-L-alpha-aminoacyl-tRNA + H2O = an N-acyl-L-amino acid + a tRNA + H(+). Hydrolyzes ribosome-free peptidyl-tRNAs (with 1 or more amino acids incorporated), which drop off the ribosome during protein synthesis, or as a result of ribosome stalling. Functionally, catalyzes the release of premature peptidyl moieties from peptidyl-tRNA molecules trapped in stalled 50S ribosomal subunits, and thus maintains levels of free tRNAs and 50S ribosomes. In Xanthomonas oryzae pv. oryzae (strain MAFF 311018), this protein is Peptidyl-tRNA hydrolase.